The primary structure comprises 343 residues: Ribosomal RNA small subunit methyltransferase C (343 aa).

This sequence belongs to the methyltransferase superfamily. RsmC family. Monomer.

The protein localises to the cytoplasm. The catalysed reaction is guanosine(1207) in 16S rRNA + S-adenosyl-L-methionine = N(2)-methylguanosine(1207) in 16S rRNA + S-adenosyl-L-homocysteine + H(+). Functionally, specifically methylates the guanine in position 1207 of 16S rRNA in the 30S particle. In Shigella flexneri serotype 5b (strain 8401), this protein is Ribosomal RNA small subunit methyltransferase C.